The following is a 989-amino-acid chain: Autotransporter adhesin/invasin TibA (989 aa).

An N-terminal signal peptide occupies residues Met1–Ala54. O-alpha-linked (D-glycero-D-manno-heptose) serine glycans are attached at residues Ser74, Ser86, Ser93, Ser94, Ser97, Ser100, Ser112, Ser113, Ser116, Ser119, Ser124, Ser131, Ser132, and Ser135. Repeat copies occupy residues Thr82–Ser100, Thr101–Ser119, Ser120–Asn138, Thr139–Gly157, Thr158–Ser176, Ala177–Ala195, Thr196–Asp214, Thr215–Lys233, Thr234–Gly251, Thr252–Asn270, Thr271–Glu289, and Thr290–Lys308. Positions Thr82 to Lys308 are 12 X 19 AA approximate repeats. A compositionally biased stretch (polar residues) spans His110 to Asn123. The disordered stretch occupies residues His110–Arg146. Positions Ser124–Ser135 are enriched in low complexity. Positions Ala136–Arg146 are enriched in polar residues. O-alpha-linked (D-glycero-D-manno-heptose) serine glycans are attached at residues Ser151, Ser154, Ser162, Ser170, Ser176, Ser181, Ser188, Ser189, Ser200, Ser226, Ser227, Ser230, Ser238, Ser248, Ser263, Ser264, Ser275, Ser294, Ser305, Ser313, and Ser322. Positions Trp623–Thr686 are disordered. Positions Thr629–Asn638 are enriched in pro residues. 8 tandem repeats follow at residues Pro639–Asn643, Pro644–Asn648, Pro649–Asn653, Pro654–Asn658, Pro659–Asn663, Pro664–Lys668, Pro669–Lys673, and Pro674–Thr678. The span at Pro639–Gly667 shows a compositional bias: low complexity. The tract at residues Pro639–Thr678 is 8 X 5 AA repeats of P-[DG]-[AGT]-[DGA]-[NKT]. Positions Asn721–Phe989 constitute an Autotransporter domain.

As to quaternary structure, homohexamer. In terms of processing, glycosylated by TibC. Glycosylation is required for adhesion to and invasion of host cells. Glycosylation is dispensable for bacterial autoaggregation and biofilm formation.

It is found in the cell outer membrane. Functionally, mediates both adhesion to and invasion of human intestine epithelial cells. Also mediates bacterial cell aggregation via intercellular TibA-TibA interaction. Enhances biofilm formation. The sequence is that of Autotransporter adhesin/invasin TibA from Escherichia coli O78:H11 (strain H10407 / ETEC).